A 139-amino-acid chain; its full sequence is Arsenate reductase (139 aa).

Catalysis depends on nucleophile residues cysteine 10, cysteine 82, and cysteine 89. Disulfide bonds link cysteine 10–cysteine 82 and cysteine 82–cysteine 89.

The protein belongs to the low molecular weight phosphotyrosine protein phosphatase family. Thioredoxin-coupled ArsC subfamily.

It is found in the cytoplasm. It catalyses the reaction arsenate + [thioredoxin]-dithiol + H(+) = arsenite + [thioredoxin]-disulfide + H2O. In terms of biological role, catalyzes the reduction of arsenate [As(V)] to arsenite [As(III)]. In Oceanobacillus iheyensis (strain DSM 14371 / CIP 107618 / JCM 11309 / KCTC 3954 / HTE831), this protein is Arsenate reductase.